Here is a 527-residue protein sequence, read N- to C-terminus: MSDTLTADVIGQRVEVNGEHATVRFAGVVPPVAGPWLGVEWDNPERGKHDGSHEGTVYFQCRHPTGGSFIRPNKVNFGTDFLTAIKNRYVLEDGPEEDRKEQIVTIGNKPVETIGFDSIMKQQSQLSKLQEVSLRNCAVSCAGEKGGVAEGCPNIRKVDLSKNLLSSWDEVIHIADQLRHLEVLNVSENKLKFPSGSVLTGTLSALKVLVLNQTGITWAEVLRCAMGCPGLEELYLESNNIFISERPTDVLQTVKLLDLSSNQLIDENQLYLIAHLPRLEQLILSDIGISSLHFPDAGIGCKTSLFPSLKYLVVNDNQISQWSFFNELDKLPSLRALSCLRNPLTKEDKEAETARLLIIASIGQLKTLNKCEILPEERRRAELDYRKAFGNEWKQAGGHKDPDKNRLSEEFLTAHPRYQFLCLKYGAPEEWELKTQQPLMLKNQLLTLKIKYPHQLDQKVLEKQLPGSMTIQKVKGLLSRLLKVPVSDLLLSYESPQKPGVEIELENDLKSLQFYSVENGDCLLVRW.

Residue serine 2 is modified to N-acetylserine. Residues 27–71 form the CAP-Gly domain; that stretch reads GVVPPVAGPWLGVEWDNPERGKHDGSHEGTVYFQCRHPTGGSFIR. LRR repeat units follow at residues 154–175, 180–200, 205–226, 230–252, 253–274, 278–299, and 308–329; these read NIRK…IHIA, HLEV…SVLT, ALKV…RCAM, GLEE…DVLQ, TVKL…YLIA, RLEQ…DAGI, and SLKY…NELD. The region spanning 342–384 is the LRRCT domain; it reads NPLTKEDKEAETARLLIIASIGQLKTLNKCEILPEERRRAELD. Lysine 463 is subject to N6-acetyllysine. Residue serine 495 is modified to Phosphoserine.

The protein belongs to the TBCE family. In terms of assembly, supercomplex made of cofactors A to E. Cofactors A and D function by capturing and stabilizing tubulin in a quasi-native conformation. Cofactor E binds to the cofactor D-tubulin complex; interaction with cofactor C then causes the release of tubulin polypeptides that are committed to the native state. Cofactors B and E can form a heterodimer which binds to alpha-tubulin and enhances their ability to dissociate tubulin heterodimers. Interacts with TBCD.

It is found in the cytoplasm. Its subcellular location is the cytoskeleton. In terms of biological role, tubulin-folding protein; involved in the second step of the tubulin folding pathway and in the regulation of tubulin heterodimer dissociation. Required for correct organization of microtubule cytoskeleton and mitotic splindle, and maintenance of the neuronal microtubule network. This chain is Tubulin-specific chaperone E (TBCE), found in Pongo abelii (Sumatran orangutan).